A 714-amino-acid polypeptide reads, in one-letter code: Methyl-accepting chemotaxis protein TlpQ (714 aa).

Residues 12-32 form a helical membrane-spanning segment; it reads ITLLAGLCLLGVVALLVGLSV. The region spanning 50–290 is the Cache domain; it reads LDESARLRLE…LLGKNLAKAD (241 aa). Histamine-binding positions include E170, 208 to 210, and D239; that span reads YFD. A helical transmembrane segment spans residues 360-380; sequence TWVELGLGLGAAVLGLLVLWL. Residues 383-437 form the HAMP domain; it reads RGVTRPILGVAHMLRDIASGEGDLTQRLPHTGRDELGELAGWFNRFLDKLQPIIR. The Methyl-accepting transducer domain maps to 442–678; that stretch reads SVRDARSTAD…EINRNVAAIR (237 aa).

The protein belongs to the methyl-accepting chemotaxis (MCP) protein family. In terms of assembly, homotetramer.

The protein resides in the cell membrane. Its function is as follows. Chemotactic-signal transducers respond to changes in the concentration of attractants and repellents in the environment, transduce a signal from the outside to the inside of the cell, and facilitate sensory adaptation through the variation of the level of methylation. TlpQ is a chemoreceptor that binds and mediates chemotaxis to histamine, a key biological signaling molecule. It binds histamine with high affinity, which permits responses to very low histamine concentrations. Chemotaxis to histamine may play a role in the virulence of P.aeruginosa by recruiting cells at the infection site and consequently modulating the expression of quorum-sensing-dependent virulence genes. TlpQ also binds and mediates chemotaxis to polyamines such as putrescine, spermidine, cadaverine, agmatine and ethylenediamine. In addition, binds the quorum-sensing signal autoinducer 2 (AI-2), thus inducing chemotaxis toward AI-2 and biofilm formation. This is Methyl-accepting chemotaxis protein TlpQ from Pseudomonas aeruginosa (strain ATCC 15692 / DSM 22644 / CIP 104116 / JCM 14847 / LMG 12228 / 1C / PRS 101 / PAO1).